A 283-amino-acid polypeptide reads, in one-letter code: MTETRRLRILITNDDGIKAKGISLLISLLREADFADLYVVAPLEEQSGRSMAFSLVEPTALEPFDYPQRVQEAWAVTGTPVDCVKLAIGELFKENALDLILSGINNGKNSGRCLYYSATVGAIREANLHGIPAIALSQSENIAFFQKAHMASLIRSLCEFTVAYKHTDPLGLNVNFPASTDDSPWKGIRFTLSGNEFLFGIPRLVRTEGNRRYYTLYDMRDKVSEEFSEEYLALANNYISAAPLVSKNTPRATLSEEELAFLKDSFEQSVLWKASLNLEEDLA.

Residues Asp14, Asp15, Ser47, and Asn105 each coordinate a divalent metal cation.

The protein belongs to the SurE nucleotidase family. A divalent metal cation serves as cofactor.

The protein resides in the cytoplasm. It catalyses the reaction a ribonucleoside 5'-phosphate + H2O = a ribonucleoside + phosphate. Nucleotidase that shows phosphatase activity on nucleoside 5'-monophosphates. The polypeptide is 5'-nucleotidase SurE (Chlamydia trachomatis serovar D (strain ATCC VR-885 / DSM 19411 / UW-3/Cx)).